Consider the following 231-residue polypeptide: Cytochrome c oxidase subunit 2 (231 aa).

Topologically, residues 1-30 (MNNFFQGYNLLFQHSLFASYMDWFHSFNCS) are mitochondrial intermembrane. A helical membrane pass occupies residues 31–52 (LLLGVLVFVTLLFGYLIFGTFY). Residues 53–69 (FKSKKIEYQFGELLCSI) are Mitochondrial matrix-facing. The chain crosses the membrane as a helical span at residues 70-89 (FPTIILLMQMVPSLSLLYYY). Over 90–231 (GLMNLDSNLT…FKSWCFGTME (142 aa)) the chain is Mitochondrial intermembrane. Positions 164, 199, 201, 203, 207, and 210 each coordinate Cu cation. Glu201 contacts Mg(2+).

It belongs to the cytochrome c oxidase subunit 2 family. As to quaternary structure, component of the cytochrome c oxidase (complex IV, CIV), a multisubunit enzyme composed of a catalytic core of 3 subunits and several supernumerary subunits. The complex exists as a monomer or a dimer and forms supercomplexes (SCs) in the inner mitochondrial membrane with ubiquinol-cytochrome c oxidoreductase (cytochrome b-c1 complex, complex III, CIII). It depends on Cu cation as a cofactor.

Its subcellular location is the mitochondrion inner membrane. It catalyses the reaction 4 Fe(II)-[cytochrome c] + O2 + 8 H(+)(in) = 4 Fe(III)-[cytochrome c] + 2 H2O + 4 H(+)(out). In terms of biological role, component of the cytochrome c oxidase, the last enzyme in the mitochondrial electron transport chain which drives oxidative phosphorylation. The respiratory chain contains 3 multisubunit complexes succinate dehydrogenase (complex II, CII), ubiquinol-cytochrome c oxidoreductase (cytochrome b-c1 complex, complex III, CIII) and cytochrome c oxidase (complex IV, CIV), that cooperate to transfer electrons derived from NADH and succinate to molecular oxygen, creating an electrochemical gradient over the inner membrane that drives transmembrane transport and the ATP synthase. Cytochrome c oxidase is the component of the respiratory chain that catalyzes the reduction of oxygen to water. Electrons originating from reduced cytochrome c in the intermembrane space (IMS) are transferred via the dinuclear copper A center (CU(A)) of subunit 2 and heme A of subunit 1 to the active site in subunit 1, a binuclear center (BNC) formed by heme A3 and copper B (CU(B)). The BNC reduces molecular oxygen to 2 water molecules using 4 electrons from cytochrome c in the IMS and 4 protons from the mitochondrial matrix. This Caenorhabditis elegans protein is Cytochrome c oxidase subunit 2.